Reading from the N-terminus, the 522-residue chain is Tetratricopeptide repeat protein 39C (522 aa).

TPR repeat units lie at residues 254–287, 292–325, and 424–457; these read SLFM…AVDQ, HVCL…SRWS, and GLKH…ESCR.

This sequence belongs to the TTC39 family.

This is Tetratricopeptide repeat protein 39C (Ttc39c) from Rattus norvegicus (Rat).